A 105-amino-acid chain; its full sequence is Vacuolar ATPase assembly integral membrane protein VMA21 homolog (105 aa).

The disordered stretch occupies residues 1–26; the sequence is MSTKNKKAAGGNGGAPKQTRQQSHDS. The Cytoplasmic segment spans residues 1–36; the sequence is MSTKNKKAAGGNGGAPKQTRQQSHDSQDYSSFKTVL. Residues 37–57 form a helical membrane-spanning segment; that stretch reads FYCMLIVFLPVLTFFVLKGFV. The Lumenal portion of the chain corresponds to 58–68; sequence LDQFLDISEVK. Residues 69–89 form a helical membrane-spanning segment; that stretch reads VNIASAVGAVVALHIALGLYI. The Cytoplasmic segment spans residues 90–105; that stretch reads YRAYFGTTGSKASKTD.

Belongs to the VMA21 family.

It localises to the endoplasmic reticulum membrane. The protein resides in the endoplasmic reticulum-Golgi intermediate compartment membrane. The protein localises to the cytoplasmic vesicle. It is found in the COPII-coated vesicle membrane. Functionally, required for the assembly of the V0 complex of the vacuolar ATPase (V-ATPase) in the endoplasmic reticulum. In Drosophila erecta (Fruit fly), this protein is Vacuolar ATPase assembly integral membrane protein VMA21 homolog.